The sequence spans 369 residues: MQFEIITTTAQLHDFIATLDGSPISLDTEFVRTRTYAANLGLLQISQNTQITLIDPIAVGDLSSFWQAIDNKNIILHASSEDLEIIRDHKGDLNFTLFDTQIACSFLNMGASLGYAKMVETLEAVIVDKGESRTDWCARPLSEKQINYAGVDVLYLQPCLEKLQQQLENKKMFPFFEQECQSVLAQKMVKQDPDKAYKLLNNLFKLDRQGLAIIKALAKWRLLTAQERNLALNFVVKADHLWLLAYYQPTSLDDLRRLNLLPNEIRIHGQQILTIMTQVISQDESTYPPLVNRLVDFPAYKSTVKSMRDKIQLCAEKYDLPLELLASKRVINEYLSWLWKLTNLQRQTANKPKLLTGWRFELIGHQFEH.

The 3'-5' exonuclease domain occupies 4 to 168 (EIITTTAQLH…CLEKLQQQLE (165 aa)). In terms of domain architecture, HRDC spans 207-286 (DRQGLAIIKA…TQVISQDEST (80 aa)).

The protein belongs to the RNase D family. A divalent metal cation serves as cofactor.

The protein localises to the cytoplasm. The enzyme catalyses Exonucleolytic cleavage that removes extra residues from the 3'-terminus of tRNA to produce 5'-mononucleotides.. Functionally, exonuclease involved in the 3' processing of various precursor tRNAs. Initiates hydrolysis at the 3'-terminus of an RNA molecule and releases 5'-mononucleotides. The protein is Ribonuclease D of Psychromonas ingrahamii (strain DSM 17664 / CCUG 51855 / 37).